A 300-amino-acid chain; its full sequence is Interferon-stimulated gene 20 kDa protein (300 aa).

Residues Asp-11, Glu-13, Asp-90, and His-93 each coordinate Mn(2+).

It belongs to the exonuclease superfamily. In terms of assembly, associates with PML and SP100 in the PML NB complex. Associates with survival motor neuron protein (SMN)-containing macromolecular nuclear complexes and U1 and U2 snRNAs and U3 snoRNA. Requires Mn(2+) as cofactor.

Its subcellular location is the nucleus. The protein localises to the nucleolus. It is found in the cytoplasm. The protein resides in the cajal body. It localises to the P-body. It catalyses the reaction Exonucleolytic cleavage in the 3'- to 5'-direction to yield nucleoside 5'-phosphates.. Its function is as follows. Interferon-induced antiviral exoribonuclease that acts mainly on single-stranded RNA. Inhibition of several viruses does not involve the degradation of viral RNAs, but rather the inhibition of translation of viral proteins. Exerts a translational control over a large panel of non-self RNA substrates while sparing endogenous transcripts. This activity correlates with the protein's ability to localize in cytoplasmic processing bodies. May also act as master regulator of over hundred interferon stimulated genes leading to viral genome translation inhibition. May play additional roles in the maturation of snRNAs and rRNAs, and in ribosome biogenesis. The sequence is that of Interferon-stimulated gene 20 kDa protein (Isg20) from Mus musculus (Mouse).